The sequence spans 852 residues: Carbohydrate-responsive element-binding protein (852 aa).

Low complexity predominate over residues 1 to 12; sequence MAGALAGLAAGL. Disordered regions lie at residues 1 to 36 and 54 to 80; these read MAGA…SLRR and VSSP…FGPR. Phosphoserine is present on residues serine 20, serine 23, and serine 25. Threonine 27 is subject to Phosphothreonine. Serine 29 bears the Phosphoserine mark. A Phosphoserine modification is found at serine 196. Disordered stretches follow at residues 328-365, 486-527, and 548-648; these read DSLF…CPGP, PCFS…NNPC, and STLL…NKTE. Low complexity predominate over residues 505 to 521; the sequence is ASPPTLAPATASPPTTA. Polar residues predominate over residues 548–559; it reads STLLRSPGSPQE. Serine 556 is modified (phosphoserine; by AMPK). Pro residues predominate over residues 568 to 584; it reads FLPPTPAPTPPRPPPGP. Phosphoserine occurs at positions 602, 614, and 631. The bHLH domain maps to 649 to 703; that stretch reads NRRITHISAEQKRRFNIKLGFDTLHGLVSTLSAQPSLKVSKATTLQKTAEYILML. The tract at residues 703–724 is leucine-zipper; that stretch reads LQQERAGLQEEAQQLRDEIEEL.

Binds DNA as a heterodimer with MLX/TCFL4. In terms of processing, phosphorylation at Ser-556 by AMPK inactivates the DNA-binding activity. Expressed in liver, heart, kidney, cerebellum and intestinal tissues.

The protein localises to the nucleus. Its function is as follows. Binds DNA as a heterodimer with MLX/TCFL4 and activates transcription. Binds to the canonical E box sequence 5'-CACGTG-3'. Plays a role in transcriptional activation of glycolytic target genes. Involved in glucose-responsive gene regulation. Regulates transcription in response to changes in cellular carbohydrate abundance such as occurs during fasting to feeding metabolic transition. Refeeding stimulates MLXIPL/ChREBP transcription factor, leading to increased BCKDK to PPM1K expression ratio, phosphorylation and activation of ACLY that ultimately results in the generation of malonyl-CoA and oxaloacetate immediate substrates of de novo lipogenesis and gluconeogenesis, respectively. This chain is Carbohydrate-responsive element-binding protein (MLXIPL), found in Homo sapiens (Human).